Consider the following 492-residue polypeptide: Aspartyl/glutamyl-tRNA(Asn/Gln) amidotransferase subunit B (492 aa).

The protein belongs to the GatB/GatE family. GatB subfamily. Heterotrimer of A, B and C subunits.

The catalysed reaction is L-glutamyl-tRNA(Gln) + L-glutamine + ATP + H2O = L-glutaminyl-tRNA(Gln) + L-glutamate + ADP + phosphate + H(+). The enzyme catalyses L-aspartyl-tRNA(Asn) + L-glutamine + ATP + H2O = L-asparaginyl-tRNA(Asn) + L-glutamate + ADP + phosphate + 2 H(+). Allows the formation of correctly charged Asn-tRNA(Asn) or Gln-tRNA(Gln) through the transamidation of misacylated Asp-tRNA(Asn) or Glu-tRNA(Gln) in organisms which lack either or both of asparaginyl-tRNA or glutaminyl-tRNA synthetases. The reaction takes place in the presence of glutamine and ATP through an activated phospho-Asp-tRNA(Asn) or phospho-Glu-tRNA(Gln). The chain is Aspartyl/glutamyl-tRNA(Asn/Gln) amidotransferase subunit B from Azorhizobium caulinodans (strain ATCC 43989 / DSM 5975 / JCM 20966 / LMG 6465 / NBRC 14845 / NCIMB 13405 / ORS 571).